We begin with the raw amino-acid sequence, 1128 residues long: Exportin-6 (1128 aa).

In terms of domain architecture, Importin N-terminal spans 31–97 (IEELLNSFAG…RSCLPKLLLS (67 aa)).

It belongs to the exportin family.

It localises to the nucleus. The protein localises to the cytoplasm. Mediates the nuclear export of actin and profilin-actin complexes in somatic cells. In Danio rerio (Zebrafish), this protein is Exportin-6 (xpo6).